A 234-amino-acid chain; its full sequence is MELIVSILWLAITAENLANTLATNYCNLQSCKRNNAIHTMCQYTSPTPGPMCLEYSNVGFTDAEKDAIVNKHNELRQRVASGKEMRGTNGPQPPAVKMPNLTWDPELATIAQRWANQCTFEHDACRNVERFAVGQNIAATSSSGKNKSTPNEMILLWYNEVKDFDNRWISSFPSDDNILMKVGHYTQIVWAKTTKIGCGRIMFKEPDNWTKHYLVCNYGPAGNVLGAPIYEIKK.

The first 22 residues, 1 to 22, serve as a signal peptide directing secretion; sequence MELIVSILWLAITAENLANTLA. 4 disulfides stabilise this stretch: C26–C41, C31–C125, C52–C118, and C198–C216. The SCP domain occupies 69 to 218; it reads VNKHNELRQR…WTKHYLVCNY (150 aa). Residues 80–99 form a disordered region; the sequence is ASGKEMRGTNGPQPPAVKMP.

The protein belongs to the CRISP family. As to expression, expressed by the venom gland.

Its subcellular location is the secreted. This is Venom allergen 3 from Solenopsis invicta (Red imported fire ant).